The chain runs to 226 residues: MTILVVTGTGTGVGKTVVCAALASAARQAGIDVAVCKPVQTGTARGDDDLAEVGRLAGVTQLAGLARYPQPMAPAAAAEHAGMALPARDQIVRLIADLDRPGRLTLVEGAGGLLVELAEPGVTLRDVAVDVAAAALVVVTADLGTLNHTKLTLEALAAQQVSCAGLVIGSWPDPPGLVAASNRSALARIAMVRAALPAGAASLDAGDFAAMSAAAFDRNWVAGLVG.

Residue 12–17 (GVGKTV) coordinates ATP. Threonine 16 provides a ligand contact to Mg(2+). Lysine 37 is an active-site residue. Threonine 41 provides a ligand contact to substrate. ATP is bound by residues aspartate 49, 108-111 (EGAG), 169-170 (GS), and 197-199 (PAG). 2 residues coordinate Mg(2+): aspartate 49 and glutamate 108.

Belongs to the dethiobiotin synthetase family. In terms of assembly, homodimer. Requires Mg(2+) as cofactor.

It localises to the cytoplasm. It catalyses the reaction (7R,8S)-7,8-diammoniononanoate + CO2 + ATP = (4R,5S)-dethiobiotin + ADP + phosphate + 3 H(+). The protein operates within cofactor biosynthesis; biotin biosynthesis; biotin from 7,8-diaminononanoate: step 1/2. Its function is as follows. Catalyzes a mechanistically unusual reaction, the ATP-dependent insertion of CO2 between the N7 and N8 nitrogen atoms of 7,8-diaminopelargonic acid (DAPA, also called 7,8-diammoniononanoate) to form a ureido ring. This is ATP-dependent dethiobiotin synthetase BioD from Mycobacterium tuberculosis (strain ATCC 25177 / H37Ra).